The chain runs to 474 residues: Synaptotagmin-17 (474 aa).

Residues 60 to 112 are disordered; that stretch reads WLMASRSSDKDGDSVHTASEVPLTPRTNSPDGRRSSSDTSKSTYSLTRRISSL. Over residues 96 to 112 the composition is skewed to low complexity; sequence SDTSKSTYSLTRRISSL. Phosphoserine occurs at positions 118 and 119. C2 domains follow at residues 184 to 310 and 321 to 455; these read QLGM…HWWK and ELGE…EQWH.

The protein belongs to the synaptotagmin family.

The protein resides in the membrane. Its function is as follows. Plays a role in dendrite formation by melanocytes. This is Synaptotagmin-17 (SYT17) from Pongo abelii (Sumatran orangutan).